Reading from the N-terminus, the 368-residue chain is Protein pxr1 (368 aa).

2 disordered regions span residues 1-28 (MGLAAPKNKIKLSHDPNNTRWSGNTDSF) and 161-339 (KEKA…PMGI). Positions 15–27 (DPNNTRWSGNTDS) are enriched in polar residues. Residues 25 to 79 (TDSFGHRMMKSQGWTPGEYLGAKDAAHAEFHTEANASHIRVVIKDNTLGLGAKIG) form the G-patch domain. The segment covering 168–182 (SSEESDSSSDEEEEK) has biased composition (acidic residues). Basic residues-rich tracts occupy residues 209–226 (SKKSKKEKKEKKEKKSKK), 242–254 (KSKKSKKDRKSKS), 271–283 (KARKKEKKEKKRK), and 301–312 (SSKKSKKDKHKS). Positions 313-324 (PSTSKTSTKEST) are enriched in low complexity. Over residues 325–334 (PIVSESSGRS) the composition is skewed to polar residues.

The protein belongs to the PINX1 family.

The protein localises to the nucleus. Its subcellular location is the nucleolus. Involved in rRNA-processing at A0, A1 and A2 sites and negatively regulates telomerase. The chain is Protein pxr1 (pxr1) from Botryotinia fuckeliana (strain B05.10) (Noble rot fungus).